Reading from the N-terminus, the 367-residue chain is Putative threonine-phosphate decarboxylase (367 aa).

O-phospho-L-threonine-binding positions include 12-13 (HG), asparagine 29, and asparagine 152. An N6-(pyridoxal phosphate)lysine modification is found at lysine 213. Arginine 320 and arginine 334 together coordinate O-phospho-L-threonine.

It belongs to the class-II pyridoxal-phosphate-dependent aminotransferase family. Requires pyridoxal 5'-phosphate as cofactor.

The catalysed reaction is O-phospho-L-threonine + H(+) = (R)-1-aminopropan-2-yl phosphate + CO2. The protein operates within cofactor biosynthesis; adenosylcobalamin biosynthesis. Functionally, decarboxylates L-threonine-O-3-phosphate to yield (R)-1-amino-2-propanol O-2-phosphate, the precursor for the linkage between the nucleotide loop and the corrin ring in cobalamin. The polypeptide is Putative threonine-phosphate decarboxylase (cobD) (Caldanaerobacter subterraneus subsp. tengcongensis (strain DSM 15242 / JCM 11007 / NBRC 100824 / MB4) (Thermoanaerobacter tengcongensis)).